Here is a 517-residue protein sequence, read N- to C-terminus: tRNA-2-methylthio-N(6)-dimethylallyladenosine synthase (517 aa).

Positions 18-137 (RTYQVRTYGC…LPTLLDRARH (120 aa)) constitute an MTTase N-terminal domain. Residues cysteine 27, cysteine 66, cysteine 100, cysteine 174, cysteine 178, and cysteine 181 each coordinate [4Fe-4S] cluster. The region spanning 160-397 (RESDYAAWVS…ELQEQICMEE (238 aa)) is the Radical SAM core domain. The TRAM domain occupies 399 to 470 (RVLIGRIVEL…PHHLIADAGI (72 aa)).

It belongs to the methylthiotransferase family. MiaB subfamily. Monomer. [4Fe-4S] cluster serves as cofactor.

The protein localises to the cytoplasm. It carries out the reaction N(6)-dimethylallyladenosine(37) in tRNA + (sulfur carrier)-SH + AH2 + 2 S-adenosyl-L-methionine = 2-methylsulfanyl-N(6)-dimethylallyladenosine(37) in tRNA + (sulfur carrier)-H + 5'-deoxyadenosine + L-methionine + A + S-adenosyl-L-homocysteine + 2 H(+). Functionally, catalyzes the methylthiolation of N6-(dimethylallyl)adenosine (i(6)A), leading to the formation of 2-methylthio-N6-(dimethylallyl)adenosine (ms(2)i(6)A) at position 37 in tRNAs that read codons beginning with uridine. In Mycobacterium leprae (strain TN), this protein is tRNA-2-methylthio-N(6)-dimethylallyladenosine synthase.